A 208-amino-acid polypeptide reads, in one-letter code: Small ribosomal subunit protein uS4 (208 aa).

Residues 32–53 form a disordered region; it reads LNRKRGKNSPGQHGASKVKMSD. The 63-residue stretch at 99–161 folds into the S4 RNA-binding domain; sequence LRLDNVVYRL…YKSNVIIKKL (63 aa).

It belongs to the universal ribosomal protein uS4 family. In terms of assembly, part of the 30S ribosomal subunit. Contacts protein S5. The interaction surface between S4 and S5 is involved in control of translational fidelity.

Its function is as follows. One of the primary rRNA binding proteins, it binds directly to 16S rRNA where it nucleates assembly of the body of the 30S subunit. Functionally, with S5 and S12 plays an important role in translational accuracy. In Endomicrobium trichonymphae, this protein is Small ribosomal subunit protein uS4.